A 428-amino-acid chain; its full sequence is Serine--tRNA ligase (428 aa).

231–233 (TAE) lines the L-serine pocket. 262–264 (RSE) provides a ligand contact to ATP. Glutamate 285 is an L-serine binding site. Residue 349–352 (EISS) coordinates ATP. Serine 385 contributes to the L-serine binding site.

The protein belongs to the class-II aminoacyl-tRNA synthetase family. Type-1 seryl-tRNA synthetase subfamily. Homodimer. The tRNA molecule binds across the dimer.

The protein resides in the cytoplasm. It catalyses the reaction tRNA(Ser) + L-serine + ATP = L-seryl-tRNA(Ser) + AMP + diphosphate + H(+). It carries out the reaction tRNA(Sec) + L-serine + ATP = L-seryl-tRNA(Sec) + AMP + diphosphate + H(+). The protein operates within aminoacyl-tRNA biosynthesis; selenocysteinyl-tRNA(Sec) biosynthesis; L-seryl-tRNA(Sec) from L-serine and tRNA(Sec): step 1/1. In terms of biological role, catalyzes the attachment of serine to tRNA(Ser). Is also able to aminoacylate tRNA(Sec) with serine, to form the misacylated tRNA L-seryl-tRNA(Sec), which will be further converted into selenocysteinyl-tRNA(Sec). The sequence is that of Serine--tRNA ligase from Staphylococcus carnosus (strain TM300).